The following is a 275-amino-acid chain: Dermonecrotic toxin SpeSicTox-betaIIA2iii (275 aa).

Residue His-5 is part of the active site. Mg(2+) is bound by residues Glu-25 and Asp-27. The active-site Nucleophile is His-41. 2 disulfides stabilise this stretch: Cys-45–Cys-51 and Cys-47–Cys-190. Residue Asp-85 participates in Mg(2+) binding.

This sequence belongs to the arthropod phospholipase D family. Class II subfamily. The cofactor is Mg(2+). As to expression, expressed by the venom gland.

The protein resides in the secreted. The enzyme catalyses an N-(acyl)-sphingosylphosphocholine = an N-(acyl)-sphingosyl-1,3-cyclic phosphate + choline. The catalysed reaction is an N-(acyl)-sphingosylphosphoethanolamine = an N-(acyl)-sphingosyl-1,3-cyclic phosphate + ethanolamine. It catalyses the reaction a 1-acyl-sn-glycero-3-phosphocholine = a 1-acyl-sn-glycero-2,3-cyclic phosphate + choline. It carries out the reaction a 1-acyl-sn-glycero-3-phosphoethanolamine = a 1-acyl-sn-glycero-2,3-cyclic phosphate + ethanolamine. Functionally, dermonecrotic toxins cleave the phosphodiester linkage between the phosphate and headgroup of certain phospholipids (sphingolipid and lysolipid substrates), forming an alcohol (often choline) and a cyclic phosphate. This toxin acts on sphingomyelin (SM). It may also act on ceramide phosphoethanolamine (CPE), lysophosphatidylcholine (LPC) and lysophosphatidylethanolamine (LPE), but not on lysophosphatidylserine (LPS), and lysophosphatidylglycerol (LPG). It acts by transphosphatidylation, releasing exclusively cyclic phosphate products as second products. Induces dermonecrosis, hemolysis, increased vascular permeability, edema, inflammatory response, and platelet aggregation. The sequence is that of Dermonecrotic toxin SpeSicTox-betaIIA2iii from Sicarius peruensis (Six-eyed sand spider).